The sequence spans 464 residues: tRNA modification GTPase MnmE (464 aa).

Residues arginine 23, glutamate 84, and arginine 123 each contribute to the (6S)-5-formyl-5,6,7,8-tetrahydrofolate site. A TrmE-type G domain is found at 216–386 (GARATLVGRP…LGATVARLLL (171 aa)). Asparagine 226 contributes to the K(+) binding site. Residues 226-231 (NAGKSS), 245-251 (TPIPGTT), and 270-273 (DTAG) each bind GTP. Position 230 (serine 230) interacts with Mg(2+). Residues threonine 245, isoleucine 247, and threonine 250 each contribute to the K(+) site. A Mg(2+)-binding site is contributed by threonine 251. Lysine 464 provides a ligand contact to (6S)-5-formyl-5,6,7,8-tetrahydrofolate.

This sequence belongs to the TRAFAC class TrmE-Era-EngA-EngB-Septin-like GTPase superfamily. TrmE GTPase family. In terms of assembly, homodimer. Heterotetramer of two MnmE and two MnmG subunits. The cofactor is K(+).

The protein localises to the cytoplasm. Exhibits a very high intrinsic GTPase hydrolysis rate. Involved in the addition of a carboxymethylaminomethyl (cmnm) group at the wobble position (U34) of certain tRNAs, forming tRNA-cmnm(5)s(2)U34. The chain is tRNA modification GTPase MnmE from Roseiflexus castenholzii (strain DSM 13941 / HLO8).